A 504-amino-acid chain; its full sequence is UDP-N-acetylmuramoylalanine--D-glutamate ligase (504 aa).

129–135 serves as a coordination point for ATP; it reads GTNGKTT.

It belongs to the MurCDEF family.

The protein resides in the cytoplasm. It catalyses the reaction UDP-N-acetyl-alpha-D-muramoyl-L-alanine + D-glutamate + ATP = UDP-N-acetyl-alpha-D-muramoyl-L-alanyl-D-glutamate + ADP + phosphate + H(+). The protein operates within cell wall biogenesis; peptidoglycan biosynthesis. Cell wall formation. Catalyzes the addition of glutamate to the nucleotide precursor UDP-N-acetylmuramoyl-L-alanine (UMA). This is UDP-N-acetylmuramoylalanine--D-glutamate ligase from Burkholderia mallei (strain NCTC 10247).